The chain runs to 348 residues: Terpene cyclase ctvD (348 aa).

A helical transmembrane segment spans residues A2–F22. The N-linked (GlcNAc...) asparagine glycan is linked to N51. The next 7 membrane-spanning stretches (helical) occupy residues P77–I97, L116–I136, L161–E181, Q191–L211, F235–I255, G283–M303, and L323–W343.

The protein belongs to the membrane-bound ascI terpene cyclase family.

The protein localises to the membrane. It functions in the pathway mycotoxin biosynthesis. Functionally, hydrolase; part of the gene cluster that mediates the biosynthesis of citreoviridin, an inhibitor of the of F1-ATPase beta-subunit. The HR-PKS ctvA accepts acetyl-CoA as the starter unit and catalyzes eight iterations of malonyl-CoA extension and four iterations of SAM-dependent methylation at C4, C12, C14, and C16. The KR and DH domains selectively act on the first six iterations to generate the hexaene chain. In the last three iterations, the KR and DH domains terminate their functions to yield a beta,delta-diketo ester moiety, which then undergoes intramolecular cyclization to yield an alpha-pyrone intermediate. Subsequently, ctvB methylates the alpha-pyrone hydroxyl group to generate citreomontanin. In order to form the tetrahydrofuran ring with the correct stereochemistry, the terminal alkenes of citreomontanin need to undergo isomerization to yield a (17Z)-hexaene, a step that could be catalyzed by ctvC. The (17Z)-hexaene then undergoes bisepoxidation by ctvC to form a (17R,16R,15S,14R)-bisepoxide moiety. Lastly, ctvD acts as a regioselective hydrolase to form the tetrahydrofuran ring with the substituents in the correct absolute configuration, completing the biosynthesis of citreoviridin. The sequence is that of Terpene cyclase ctvD from Aspergillus terreus (strain NIH 2624 / FGSC A1156).